Here is a 468-residue protein sequence, read N- to C-terminus: Cysteine--tRNA ligase (468 aa).

Residue Cys-33 coordinates Zn(2+). Residues Ala-35 to His-45 carry the 'HIGH' region motif. Residues Cys-211, His-236, and Glu-240 each contribute to the Zn(2+) site. A 'KMSKS' region motif is present at residues Lys-267–Ser-271. Lys-270 provides a ligand contact to ATP.

It belongs to the class-I aminoacyl-tRNA synthetase family. In terms of assembly, monomer. Requires Zn(2+) as cofactor.

Its subcellular location is the cytoplasm. It catalyses the reaction tRNA(Cys) + L-cysteine + ATP = L-cysteinyl-tRNA(Cys) + AMP + diphosphate. The polypeptide is Cysteine--tRNA ligase (Mycolicibacterium paratuberculosis (strain ATCC BAA-968 / K-10) (Mycobacterium paratuberculosis)).